The following is a 91-amino-acid chain: RNA-binding protein Hfq (91 aa).

Positions Asp9–Val68 constitute a Sm domain.

The protein belongs to the Hfq family. In terms of assembly, homohexamer.

In terms of biological role, RNA chaperone that binds small regulatory RNA (sRNAs) and mRNAs to facilitate mRNA translational regulation in response to envelope stress, environmental stress and changes in metabolite concentrations. Also binds with high specificity to tRNAs. This Stenotrophomonas maltophilia (strain K279a) protein is RNA-binding protein Hfq.